The following is a 338-amino-acid chain: Flap endonuclease 1 (338 aa).

The N-domain stretch occupies residues 1 to 98; that stretch reads MGTDIGDLLQ…ETLSRRKEVR (98 aa). Mg(2+) contacts are provided by D27, D80, E152, E154, D173, D175, and D236. The tract at residues 116-257 is I-domain; the sequence is AAYKYAQASS…TALKLIKKHG (142 aa). Residues 330-338 form an interaction with PCNA region; it reads RQKTLDQWF.

This sequence belongs to the XPG/RAD2 endonuclease family. FEN1 subfamily. As to quaternary structure, interacts with PCNA. PCNA stimulates the nuclease activity without altering cleavage specificity. Mg(2+) serves as cofactor.

In terms of biological role, structure-specific nuclease with 5'-flap endonuclease and 5'-3' exonuclease activities involved in DNA replication and repair. During DNA replication, cleaves the 5'-overhanging flap structure that is generated by displacement synthesis when DNA polymerase encounters the 5'-end of a downstream Okazaki fragment. Binds the unpaired 3'-DNA end and kinks the DNA to facilitate 5' cleavage specificity. Cleaves one nucleotide into the double-stranded DNA from the junction in flap DNA, leaving a nick for ligation. Also involved in the base excision repair (BER) pathway. Acts as a genome stabilization factor that prevents flaps from equilibrating into structures that lead to duplications and deletions. Also possesses 5'-3' exonuclease activity on nicked or gapped double-stranded DNA. The protein is Flap endonuclease 1 of Methanosarcina acetivorans (strain ATCC 35395 / DSM 2834 / JCM 12185 / C2A).